A 505-amino-acid polypeptide reads, in one-letter code: Beta-glucosidase 3 (505 aa).

An N-terminal signal peptide occupies residues 1-22 (MAAAAAFFCALLFISVQHGVLG). A beta-D-glucoside-binding residues include Gln-43 and His-143. The active-site Proton donor is the Glu-189. Cys-208 and Cys-217 are oxidised to a cystine. A glycan (N-linked (GlcNAc...) asparagine) is linked at Asn-221. Tyr-333 and Glu-405 together coordinate a beta-D-glucoside. Glu-405 (nucleophile) is an active-site residue. N-linked (GlcNAc...) asparagine glycans are attached at residues Asn-415 and Asn-436. 2 residues coordinate a beta-D-glucoside: Trp-450 and Tyr-466.

It belongs to the glycosyl hydrolase 1 family.

The enzyme catalyses Hydrolysis of terminal, non-reducing beta-D-glucosyl residues with release of beta-D-glucose.. The sequence is that of Beta-glucosidase 3 (BGLU3) from Oryza sativa subsp. japonica (Rice).